Consider the following 463-residue polypeptide: tRNA (guanine(37)-N(1))-methyltransferase (463 aa).

Residues His207, 245–246 (DL), 274–275 (DG), and Asn305 contribute to the S-adenosyl-L-methionine site.

Belongs to the class I-like SAM-binding methyltransferase superfamily. TRM5/TYW2 family. Monomer.

It localises to the mitochondrion matrix. The protein resides in the nucleus. Its subcellular location is the cytoplasm. It carries out the reaction guanosine(37) in tRNA + S-adenosyl-L-methionine = N(1)-methylguanosine(37) in tRNA + S-adenosyl-L-homocysteine + H(+). Specifically methylates the N1 position of guanosine-37 in various cytoplasmic and mitochondrial tRNAs. Methylation is not dependent on the nature of the nucleoside 5' of the target nucleoside. This is the first step in the biosynthesis of wybutosine (yW), a modified base adjacent to the anticodon of tRNAs and required for accurate decoding. This Pediculus humanus subsp. corporis (Body louse) protein is tRNA (guanine(37)-N(1))-methyltransferase.